We begin with the raw amino-acid sequence, 419 residues long: E3 ubiquitin-protein ligase RNF130 (419 aa).

An N-terminal signal peptide occupies residues 1–27 (MSGAARAGPARLAALALLTCSLWPTRA). Residues 28–194 (DNASQEYYTA…MPPKNFSRGS (167 aa)) are Extracellular-facing. Asn-29, Asn-40, Asn-112, Asn-135, Asn-172, and Asn-189 each carry an N-linked (GlcNAc...) asparagine glycan. The PA domain occupies 105–176 (IALLQRGNCT…SYLEKNISVQ (72 aa)). Residues 195–217 (LVFVSISFIVLMIISSAWLIFYF) form a helical membrane-spanning segment. Over 218–419 (IQKIRYTNAR…SLNANEVEWF (202 aa)) the chain is Cytoplasmic. The RING-type zinc finger occupies 264–305 (CAVCIESYKQNDVVRVLPCKHVFHKSCVDPWLSEHCTCPMCK). Ser-341 carries the post-translational modification Phosphoserine.

As to expression, in testis sections, expressed in interstitial tissue and seminiferous tubules. In tubules, expression is mainly in postmeiotic germ cells and to a much lesser extent in Sertoli cells (at protein level). Expressed at high levels in liver, lung, stomach, heart and thymus.

The protein localises to the membrane. The protein resides in the cytoplasm. The enzyme catalyses S-ubiquitinyl-[E2 ubiquitin-conjugating enzyme]-L-cysteine + [acceptor protein]-L-lysine = [E2 ubiquitin-conjugating enzyme]-L-cysteine + N(6)-ubiquitinyl-[acceptor protein]-L-lysine.. Its pathway is protein modification; protein ubiquitination. Its function is as follows. Acts as an E3 ubiquitin-protein ligase. May have a role during the programmed cell death of hematopoietic cells. The chain is E3 ubiquitin-protein ligase RNF130 from Rattus norvegicus (Rat).